A 201-amino-acid chain; its full sequence is Small ribosomal subunit protein uS4c (201 aa).

Residues 15-43 are disordered; sequence LGALPGLTSKRPRSGSDLRNQSRSGKRSQ. The 62-residue stretch at 89 to 150 folds into the S4 RNA-binding domain; it reads MRLDNILFRL…KERSRALIQN (62 aa).

This sequence belongs to the universal ribosomal protein uS4 family. Part of the 30S ribosomal subunit. Contacts protein S5. The interaction surface between S4 and S5 is involved in control of translational fidelity.

The protein localises to the plastid. It localises to the chloroplast. Its function is as follows. One of the primary rRNA binding proteins, it binds directly to 16S rRNA where it nucleates assembly of the body of the 30S subunit. In terms of biological role, with S5 and S12 plays an important role in translational accuracy. In Amborella trichopoda, this protein is Small ribosomal subunit protein uS4c (rps4).